Here is a 180-residue protein sequence, read N- to C-terminus: MENRLEERYSKEIAPALVSKFNYKSTMQAPKIEKIVLNMGVGDATQNAKLLDEAVDELTLISGQHPLITKAKKSIAGFRLREGMPIGAKVTLRGERMYDFLDKLINVSLPRVRDFHGISPKSFDGRGNYTLGVKEQLIFPEIDYDKVNRVRGLDVVIVTTANTDEEALELLTQVGMPFAK.

This sequence belongs to the universal ribosomal protein uL5 family. In terms of assembly, part of the 50S ribosomal subunit; part of the 5S rRNA/L5/L18/L25 subcomplex. Contacts the 5S rRNA and the P site tRNA. Forms a bridge to the 30S subunit in the 70S ribosome.

This is one of the proteins that bind and probably mediate the attachment of the 5S RNA into the large ribosomal subunit, where it forms part of the central protuberance. In the 70S ribosome it contacts protein S13 of the 30S subunit (bridge B1b), connecting the 2 subunits; this bridge is implicated in subunit movement. Contacts the P site tRNA; the 5S rRNA and some of its associated proteins might help stabilize positioning of ribosome-bound tRNAs. The protein is Large ribosomal subunit protein uL5 of Lacticaseibacillus casei (strain BL23) (Lactobacillus casei).